Consider the following 166-residue polypeptide: Regulatory protein RecX (166 aa).

Belongs to the RecX family.

The protein resides in the cytoplasm. Functionally, modulates RecA activity. The polypeptide is Regulatory protein RecX (Klebsiella pneumoniae (strain 342)).